A 97-amino-acid chain; its full sequence is YcgL domain-containing protein CPS_3517 (97 aa).

Residues 1-85 (MLCAIYKSAR…PQEDLLKEHK (85 aa)) form the YcgL domain.

The polypeptide is YcgL domain-containing protein CPS_3517 (Colwellia psychrerythraea (strain 34H / ATCC BAA-681) (Vibrio psychroerythus)).